The sequence spans 409 residues: Argininosuccinate synthase (409 aa).

ATP contacts are provided by residues 12–20 and Ala39; that span reads AYSGGLDTS. The L-citrulline site is built by Tyr90 and Ser95. Position 120 (Gly120) interacts with ATP. The L-aspartate site is built by Thr122, Asn126, and Asp127. Asn126 provides a ligand contact to L-citrulline. L-citrulline contacts are provided by Arg130, Ser181, Ser190, Glu266, and Tyr278.

Belongs to the argininosuccinate synthase family. Type 1 subfamily. Homotetramer.

It is found in the cytoplasm. It catalyses the reaction L-citrulline + L-aspartate + ATP = 2-(N(omega)-L-arginino)succinate + AMP + diphosphate + H(+). It functions in the pathway amino-acid biosynthesis; L-arginine biosynthesis; L-arginine from L-ornithine and carbamoyl phosphate: step 2/3. The sequence is that of Argininosuccinate synthase from Acidiphilium cryptum (strain JF-5).